The sequence spans 806 residues: Xylosyltransferase sqv-6 (806 aa).

Topologically, residues Met1–Asp11 are cytoplasmic. Residues Tyr12–Gln32 form a helical; Signal-anchor for type II membrane protein membrane-spanning segment. Topologically, residues His33–Ile806 are lumenal. A disulfide bond links Cys57 and Cys85. N-linked (GlcNAc...) asparagine glycosylation is found at Asn89 and Asn169. Disulfide bonds link Cys101/Cys445, Cys464/Cys478, and Cys466/Cys476. The region spanning Ile109–Gly205 is the WSC domain. UDP-alpha-D-xylose is bound by residues Asp264 and Thr293–Trp295. Asn325 carries an N-linked (GlcNAc...) asparagine glycan. Asp398–Trp399 provides a ligand contact to UDP-alpha-D-xylose. Residues Ser479 and Arg505–Lys506 each bind UDP-alpha-D-xylose. N-linked (GlcNAc...) asparagine glycans are attached at residues Asn614, Asn655, and Asn719. Cys772 and Cys778 are joined by a disulfide.

The protein belongs to the glycosyltransferase 14 family. XylT subfamily. Requires a divalent metal cation as cofactor.

The protein resides in the endoplasmic reticulum membrane. It is found in the golgi apparatus membrane. It catalyses the reaction UDP-alpha-D-xylose + L-seryl-[protein] = 3-O-(beta-D-xylosyl)-L-seryl-[protein] + UDP + H(+). The protein operates within glycan metabolism; chondroitin sulfate biosynthesis. It functions in the pathway glycan metabolism; heparan sulfate biosynthesis. Catalyzes the first step in biosynthesis of glycosaminoglycan. Transfers D-xylose from UDP-D-xylose to specific serine residues of the core protein. Required for vulval morphogenesis and zygotic cytokinesis, suggesting that glycosaminoglycans play a central role in vulval morphogenesis. This Caenorhabditis elegans protein is Xylosyltransferase sqv-6.